A 423-amino-acid chain; its full sequence is Polyglutamylase complex subunit TTLL1 (423 aa).

The region spanning 1-367 (MAGKVKWVTD…NGEIPDCKWN (367 aa)) is the TTL domain. Residues Lys138, 144 to 145 (QG), 181 to 184 (SLYI), and 194 to 196 (KFD) each bind ATP. Position 144 (Gln144) interacts with a protein. Residue Arg220 participates in L-glutamate binding. Residue 241–242 (TN) coordinates ATP. Lys259 contacts L-glutamate. Residues Asp313, Glu326, and Asn328 each coordinate Mg(2+). Lys344 is an L-glutamate binding site. Residues 391–423 (GADRELRSRQGQSLGPRAGRSRDSGRAVLTTWK) form a disordered region.

It belongs to the tubulin polyglutamylase family. In terms of assembly, part of the neuronal tubulin polyglutamylase complex which contains TPGS1, TPGS2, TTLL1, LRRC49 and NICN1. Interacts with PCM1, CSTPP1 and LRRC49. It depends on Mg(2+) as a cofactor. In terms of tissue distribution, expressed in a wide range of tissues. Has a stronger expression in heart, brain and testis.

The protein localises to the cytoplasm. It is found in the cytoskeleton. The protein resides in the cilium basal body. It localises to the cilium axoneme. Its subcellular location is the cell projection. The protein localises to the cilium. It is found in the flagellum. It catalyses the reaction (L-glutamyl)(n)-gamma-L-glutamyl-L-glutamyl-[protein] + L-glutamate + ATP = (L-glutamyl)(n+1)-gamma-L-glutamyl-L-glutamyl-[protein] + ADP + phosphate + H(+). Functionally, catalytic subunit of a polyglutamylase complex which modifies tubulin, generating side chains of glutamate on the gamma-carboxyl group of specific glutamate residues within the C-terminal tail of tubulin. Probably involved in the side-chain elongation step of the polyglutamylation reaction rather than the initiation step. Modifies both alpha- and beta-tubulins with a preference for the alpha-tail. Unlike most polyglutamylases of the tubulin--tyrosine ligase family, only displays a catalytic activity when in complex with other proteins as it is most likely lacking domains important for autonomous activity. Part of the neuronal tubulin polyglutamylase complex. Mediates cilia and flagella polyglutamylation which is essential for their biogenesis and motility. Involved in respiratory motile cilia function through the regulation of beating asymmetry. Essential for sperm flagella biogenesis, motility and male fertility. Involved in KLF4 glutamylation which impedes its ubiquitination, thereby leading to somatic cell reprogramming, pluripotency maintenance and embryogenesis. In Homo sapiens (Human), this protein is Polyglutamylase complex subunit TTLL1.